A 135-amino-acid chain; its full sequence is Envelope glycoprotein N (135 aa).

The first 19 residues, 1-19 (MEWNTLVLGLLVLSVVASS), serve as a signal peptide directing secretion. At 20-98 (NNTSTASTPR…SHMYELSLSS (79 aa)) the chain is on the virion surface side. Residues 21–68 (NTSTASTPRPSSSTHASTTVKATTVATTSTTTATSTSSTTSAKPGSTT) show a composition bias toward low complexity. The interval 21 to 73 (NTSTASTPRPSSSTHASTTVKATTVATTSTTTATSTSSTTSAKPGSTTHDPNV) is disordered. The helical transmembrane segment at 99-119 (FAAWWTMLNALILMGAFCIVL) threads the bilayer. Residues 120-135 (RHCCFQNFTATTTKGY) lie on the Intravirion side of the membrane.

It belongs to the herpesviridae glycoprotein N family. Interacts (via N-terminus) with gM (via N-terminus). The gM-gN heterodimer forms the gCII complex. Post-translationally, O-glycosylated.

The protein resides in the virion membrane. It is found in the host membrane. It localises to the host Golgi apparatus. Its subcellular location is the host trans-Golgi network. In terms of biological role, envelope glycoprotein necessary for proper maturation of gM and modulation of its membrane fusion activity. Also plays a critical role in virion morphogenesis. The polypeptide is Envelope glycoprotein N (Homo sapiens (Human)).